Here is a 286-residue protein sequence, read N- to C-terminus: MTQDILHRYLFDNADVRGELVQLQNSYQQVIGSHAYPPVLQTLLGELLAATSLLTATLKFSGDISVQLQGNGPVSLAVINGNNLQQLRGIARWDGELADDASLADLFGQGYMVITLTPDEGERYQGVVALDKPTLAACVEDYFNQSEQLPTALWLFADGKQAAGMFLQILPSQEDHNADFEHLCQLTATIKAEELFTLEAQEVLHRLYHQEEVRLFDPIEVSFKCTCSRERSAAAIKTIDQAEVEAILAEDGNVEMGCEYCNAKYLFDAIDIASIYANGTASNTQQ.

Disulfide bonds link Cys225–Cys227 and Cys258–Cys261.

It belongs to the HSP33 family. Post-translationally, under oxidizing conditions two disulfide bonds are formed involving the reactive cysteines. Under reducing conditions zinc is bound to the reactive cysteines and the protein is inactive.

Its subcellular location is the cytoplasm. Functionally, redox regulated molecular chaperone. Protects both thermally unfolding and oxidatively damaged proteins from irreversible aggregation. Plays an important role in the bacterial defense system toward oxidative stress. The polypeptide is 33 kDa chaperonin (Shewanella oneidensis (strain ATCC 700550 / JCM 31522 / CIP 106686 / LMG 19005 / NCIMB 14063 / MR-1)).